Reading from the N-terminus, the 455-residue chain is EP1-like glycoprotein 2 (455 aa).

Positions 1-22 are cleaved as a signal peptide; sequence MSRFAILVTLALAIATVSVVIA. The Bulb-type lectin domain occupies 44–163; the sequence is EYDASYRFIE…NGKFVWQSFD (120 aa). 6 N-linked (GlcNAc...) asparagine glycosylation sites follow: asparagine 56, asparagine 106, asparagine 191, asparagine 211, asparagine 241, and asparagine 289. Cysteine 374 bears the S-nitrosocysteine mark. Residues 374–455 form the PAN domain; the sequence is CSGVKGKTVN…NTSSVAYIKY (82 aa). Disulfide bonds link cysteine 410–cysteine 432 and cysteine 414–cysteine 420. A glycan (N-linked (GlcNAc...) asparagine) is linked at asparagine 446.

Its subcellular location is the secreted. The protein localises to the cell wall. The protein is EP1-like glycoprotein 2 of Arabidopsis thaliana (Mouse-ear cress).